Here is a 276-residue protein sequence, read N- to C-terminus: Glutamate racemase (276 aa).

Substrate is bound by residues 10–11 (DS) and 42–43 (YG). The Proton donor/acceptor role is filled by Cys-74. Position 75 to 76 (75 to 76 (NT)) interacts with substrate. The active-site Proton donor/acceptor is Cys-185. 186-187 (TH) serves as a coordination point for substrate.

Belongs to the aspartate/glutamate racemases family.

The catalysed reaction is L-glutamate = D-glutamate. Its pathway is cell wall biogenesis; peptidoglycan biosynthesis. Provides the (R)-glutamate required for cell wall biosynthesis. The chain is Glutamate racemase from Levilactobacillus brevis (strain ATCC 367 / BCRC 12310 / CIP 105137 / JCM 1170 / LMG 11437 / NCIMB 947 / NCTC 947) (Lactobacillus brevis).